Consider the following 434-residue polypeptide: Tubulin gamma chain (434 aa).

135–141 is a GTP binding site; it reads AGGTGSG.

It belongs to the tubulin family.

It localises to the cytoplasm. Its subcellular location is the cytoskeleton. The protein localises to the microtubule organizing center. The protein resides in the spindle pole body. In terms of biological role, tubulin is the major constituent of microtubules. The gamma chain is found at microtubule organizing centers (MTOC) such as the spindle poles or the centrosome, suggesting that it is involved in the minus-end nucleation of microtubule assembly. In Encephalitozoon cuniculi (strain GB-M1) (Microsporidian parasite), this protein is Tubulin gamma chain (TUB4).